The chain runs to 153 residues: MAINIVAQNKKARHDYEILEKFEAGIVLSGAEVKALRAKRANLSDAFCRFIKGELYLMNAHIAHLETANKYFTPDTRAPRKLLLHKKELEKLYVKVHKDGLTIVPLMIYFNERNYAKVSIAIAKGKKLHDKRADMKAKTLDREAKTAMKNRSY.

The protein belongs to the SmpB family.

The protein localises to the cytoplasm. Required for rescue of stalled ribosomes mediated by trans-translation. Binds to transfer-messenger RNA (tmRNA), required for stable association of tmRNA with ribosomes. tmRNA and SmpB together mimic tRNA shape, replacing the anticodon stem-loop with SmpB. tmRNA is encoded by the ssrA gene; the 2 termini fold to resemble tRNA(Ala) and it encodes a 'tag peptide', a short internal open reading frame. During trans-translation Ala-aminoacylated tmRNA acts like a tRNA, entering the A-site of stalled ribosomes, displacing the stalled mRNA. The ribosome then switches to translate the ORF on the tmRNA; the nascent peptide is terminated with the 'tag peptide' encoded by the tmRNA and targeted for degradation. The ribosome is freed to recommence translation, which seems to be the essential function of trans-translation. This is SsrA-binding protein from Sulfurovum sp. (strain NBC37-1).